The chain runs to 838 residues: Probable beta-glucosidase I (838 aa).

Asn197 carries an N-linked (GlcNAc...) asparagine glycan. Residue Asp225 is part of the active site. Positions 395 to 555 (DGKKGFKFRV…SQEELISKAA (161 aa)) constitute a PA14 domain. N-linked (GlcNAc...) asparagine glycosylation is present at Asn493.

Belongs to the glycosyl hydrolase 3 family.

The protein localises to the secreted. The catalysed reaction is Hydrolysis of terminal, non-reducing beta-D-glucosyl residues with release of beta-D-glucose.. It functions in the pathway glycan metabolism; cellulose degradation. Beta-glucosidases are one of a number of cellulolytic enzymes involved in the degradation of cellulosic biomass. Catalyzes the last step releasing glucose from the inhibitory cellobiose. In Neosartorya fischeri (strain ATCC 1020 / DSM 3700 / CBS 544.65 / FGSC A1164 / JCM 1740 / NRRL 181 / WB 181) (Aspergillus fischerianus), this protein is Probable beta-glucosidase I (bglI).